The chain runs to 479 residues: MSPQTETKANVGFKAGVKEYKLTYYTPEYETKDTDILAAFRVTPQPGVPPEEAGAAVAAESSTGTWTTVWTDGLTSLDRYKGRCYHIEPVPGEETQFIAYVAYPLDLFEEGSVTNMFTSIVGNVFGFKALAALRLEDLRIPPAYTKTFQGPPHGIQVERDKLNKYGRPLLGCTIKPKLGLSAKNYGRAVYECLRGGLDFTKDDENVNSQPFMRWRDRFLFCAEAIYKSQAETGEIKGHYLNATAGTCEEMIKRAVFARELGVPIVMHDYLTGGFTANTSLAHYCRDNGLLLHIHRAMHAVIDRQKNHGMHFRVLAKALRLSGGDHVHAGTVVGKLEGDRESTLGFVDLLRDDYVEKDRSRGIFFTQDWVSLPGVLPVASGGIHVWHMPALTEIFGDDSVLQFGGGTLGHPWGNAPGAVANRVALEACVQARNEGRDLAIEGNTIIREACKWSPELAAACEVWKEIRFNFPTVDTLDTQE.

Positions 1–2 are excised as a propeptide; the sequence is MS. Substrate contacts are provided by Asn123 and Thr173. Residue Lys175 is the Proton acceptor of the active site. Lys177 lines the substrate pocket. 3 residues coordinate Mg(2+): Lys201, Asp203, and Glu204. The residue at position 201 (Lys201) is an N6-carboxylysine. The residue at position 208 (Ser208) is a Phosphoserine. His294 (proton acceptor) is an active-site residue. Positions 295 and 327 each coordinate substrate. Position 330 is a phosphothreonine (Thr330). A substrate-binding site is contributed by Ser379.

This sequence belongs to the RuBisCO large chain family. Type I subfamily. As to quaternary structure, heterohexadecamer of 8 large chains and 8 small chains; disulfide-linked. The disulfide link is formed within the large subunit homodimers. Requires Mg(2+) as cofactor. Post-translationally, the disulfide bond which can form in the large chain dimeric partners within the hexadecamer appears to be associated with oxidative stress and protein turnover.

It localises to the plastid. Its subcellular location is the chloroplast. The catalysed reaction is 2 (2R)-3-phosphoglycerate + 2 H(+) = D-ribulose 1,5-bisphosphate + CO2 + H2O. It carries out the reaction D-ribulose 1,5-bisphosphate + O2 = 2-phosphoglycolate + (2R)-3-phosphoglycerate + 2 H(+). Functionally, ruBisCO catalyzes two reactions: the carboxylation of D-ribulose 1,5-bisphosphate, the primary event in carbon dioxide fixation, as well as the oxidative fragmentation of the pentose substrate in the photorespiration process. Both reactions occur simultaneously and in competition at the same active site. This chain is Ribulose bisphosphate carboxylase large chain, found in Nasturtium officinale (Watercress).